The chain runs to 571 residues: Putative clathrin assembly protein At2g01600 (571 aa).

One can recognise an ENTH domain in the interval 24–161; that stretch reads RVNSEYADLD…ECFRVLKYDT (138 aa). Disordered regions lie at residues 325-346 and 474-571; these read YRPD…REML and PAPN…TGLI. The segment covering 337 to 346 has biased composition (basic and acidic residues); the sequence is EPSHEEREML. Residues 508 to 522 show a composition bias toward low complexity; the sequence is QQTYQHQPQPTYQHQ. Polar residues-rich tracts occupy residues 523-532 and 543-571; these read SNPPTNNSNP and PVSQ…TGLI.

It localises to the membrane. Its subcellular location is the clathrin-coated pit. The protein localises to the golgi apparatus. The protein resides in the cytoplasmic vesicle. It is found in the clathrin-coated vesicle. The chain is Putative clathrin assembly protein At2g01600 from Arabidopsis thaliana (Mouse-ear cress).